A 133-amino-acid polypeptide reads, in one-letter code: Probable 4-amino-4-deoxy-L-arabinose-phosphoundecaprenol flippase subunit ArnF (133 aa).

At 1-5 the chain is on the cytoplasmic side; sequence MKTGY. Residues 6 to 26 form a helical membrane-spanning segment; sequence LWAIASALLVTVAQLLLKIGM. Residues 27–47 are Periplasmic-facing; the sequence is SELPDLQLEKQWFDLHWLWAN. A helical membrane pass occupies residues 48 to 68; it reads IIPISVVFVGLIGYVLSMVCW. An EamA domain is found at 51–125; sequence ISVVFVGLIG…IMLGVWLISQ (75 aa). Over 69 to 80 the chain is Cytoplasmic; sequence LLTLRTIPLNKA. Residues 81–101 traverse the membrane as a helical segment; that stretch reads YPLISLSYVFVYILAVVLPWF. Over 102 to 103 the chain is Periplasmic; it reads QE. A helical membrane pass occupies residues 104–124; the sequence is TLSWSKTIGIIFIMLGVWLIS. The Cytoplasmic portion of the chain corresponds to 125 to 133; the sequence is QKTEQTTSH.

It belongs to the ArnF family. In terms of assembly, heterodimer of ArnE and ArnF.

The protein localises to the cell inner membrane. The protein operates within bacterial outer membrane biogenesis; lipopolysaccharide biosynthesis. Functionally, translocates 4-amino-4-deoxy-L-arabinose-phosphoundecaprenol (alpha-L-Ara4N-phosphoundecaprenol) from the cytoplasmic to the periplasmic side of the inner membrane. This chain is Probable 4-amino-4-deoxy-L-arabinose-phosphoundecaprenol flippase subunit ArnF, found in Proteus mirabilis (strain HI4320).